A 348-amino-acid chain; its full sequence is Phosphoribosylformylglycinamidine cyclo-ligase (348 aa).

The protein belongs to the AIR synthase family.

It is found in the cytoplasm. It carries out the reaction 2-formamido-N(1)-(5-O-phospho-beta-D-ribosyl)acetamidine + ATP = 5-amino-1-(5-phospho-beta-D-ribosyl)imidazole + ADP + phosphate + H(+). It functions in the pathway purine metabolism; IMP biosynthesis via de novo pathway; 5-amino-1-(5-phospho-D-ribosyl)imidazole from N(2)-formyl-N(1)-(5-phospho-D-ribosyl)glycinamide: step 2/2. In Citrifermentans bemidjiense (strain ATCC BAA-1014 / DSM 16622 / JCM 12645 / Bem) (Geobacter bemidjiensis), this protein is Phosphoribosylformylglycinamidine cyclo-ligase.